The chain runs to 332 residues: Ornithine carbamoyltransferase, catabolic (332 aa).

Carbamoyl phosphate-binding positions include 60–63, Gln87, Arg111, and 138–141; these read STRT and HPTQ. L-ornithine is bound by residues Asn170, Asp230, and 234 to 235; that span reads SM. Residues 271-272 and Arg316 each bind carbamoyl phosphate; that span reads CL.

This sequence belongs to the aspartate/ornithine carbamoyltransferase superfamily. OTCase family.

Its subcellular location is the cytoplasm. It carries out the reaction carbamoyl phosphate + L-ornithine = L-citrulline + phosphate + H(+). It participates in amino-acid degradation; L-arginine degradation via ADI pathway; carbamoyl phosphate from L-arginine: step 2/2. Reversibly catalyzes the transfer of the carbamoyl group from carbamoyl phosphate (CP) to the N(epsilon) atom of ornithine (ORN) to produce L-citrulline. The sequence is that of Ornithine carbamoyltransferase, catabolic from Bacillus thuringiensis subsp. konkukian (strain 97-27).